The following is a 445-amino-acid chain: UPF0210 protein SSA_2018 (445 aa).

It belongs to the UPF0210 family. Homodimer.

This chain is UPF0210 protein SSA_2018, found in Streptococcus sanguinis (strain SK36).